Here is a 387-residue protein sequence, read N- to C-terminus: [LysW]-aminoadipate semialdehyde/glutamate semialdehyde transaminase (387 aa).

Pyridoxal 5'-phosphate contacts are provided by residues 96–97 (GT) and Phe-123. Arg-126 contacts substrate. 207–210 (DEIQ) is a binding site for pyridoxal 5'-phosphate. At Lys-236 the chain carries N6-(pyridoxal phosphate)lysine. Ser-264 is a binding site for substrate. Position 265 (Thr-265) interacts with pyridoxal 5'-phosphate.

The protein belongs to the class-III pyridoxal-phosphate-dependent aminotransferase family. LysJ subfamily. In terms of assembly, homodimer. It depends on pyridoxal 5'-phosphate as a cofactor.

Its subcellular location is the cytoplasm. The catalysed reaction is [amino-group carrier protein]-C-terminal-gamma-(L-lysyl)-L-glutamate + 2-oxoglutarate = [amino-group carrier protein]-C-terminal-N-(1-carboxy-5-oxopentan-1-yl)-L-glutamine + L-glutamate. The enzyme catalyses [amino-group carrier protein]-C-terminal-gamma-(L-ornithyl)-L-glutamate + 2-oxoglutarate = [amino-group carrier protein]-C-terminal-gamma-(L-glutamyl-5-semialdehyde)-L-glutamate + L-glutamate. The protein operates within amino-acid biosynthesis; L-lysine biosynthesis via AAA pathway; L-lysine from L-alpha-aminoadipate (Thermus route): step 4/5. It participates in amino-acid biosynthesis; L-arginine biosynthesis. Its function is as follows. Involved in both the arginine and lysine biosynthetic pathways. In Sulfolobus acidocaldarius (strain ATCC 33909 / DSM 639 / JCM 8929 / NBRC 15157 / NCIMB 11770), this protein is [LysW]-aminoadipate semialdehyde/glutamate semialdehyde transaminase.